Consider the following 3081-residue polypeptide: Cilia- and flagella-associated protein 54 (3081 aa).

9 disordered regions span residues 542 to 579, 591 to 626, 910 to 942, 1406 to 1451, 1518 to 1586, 1636 to 1657, 2176 to 2210, 2229 to 2306, and 2776 to 2806; these read SGTAGAAPPPPPRRVSMTGMLAGGSASPPNGSSGAGGA, TQTAGSPSHNGGAAGATASAGGGAAGAPPRPQQSSL, PPQPKLLQRSPTSVTLVAHPPGPGLKQPPGARK, ADAP…GITP, ESIL…YPVV, RRAALAASASTAGAGLGEEERP, GERTAAPKPASPAKGAAKGAAAAAPEPPGAGLPEP, MASG…SQRA, and ARPVATSSSGARPPGTPPGGKPGAGGGSGDG. Residues 564 to 579 show a composition bias toward low complexity; the sequence is GGSASPPNGSSGAGGA. Residues 1428-1449 show a composition bias toward pro residues; that stretch reads MPPPVPDPSAAGPPPLTPPEGI. Over residues 1538 to 1550 the composition is skewed to basic and acidic residues; sequence GGKDDKKKDDKAP. 3 stretches are compositionally biased toward low complexity: residues 1638–1648, 2181–2199, and 2240–2269; these read AALAASASTAG, APKPASPAKGAAKGAAAAA, and EPSSAGKPAAAGKPAPARAPSPGRAKSPTG. The span at 2289-2301 shows a compositional bias: pro residues; it reads PEVPGPPPPPPPS. The segment covering 2776 to 2788 has biased composition (low complexity); sequence ARPVATSSSGARP. The span at 2796-2805 shows a compositional bias: gly residues; it reads KPGAGGGSGD.

Belongs to the CFAP54 family. As to quaternary structure, part of the PDCP1 complex composed of CFAP46, CFAP54, CFAP74 and CFAP221; the PDCP1 complex binds calmodulin.

The protein localises to the cytoplasm. Its subcellular location is the cytoskeleton. The protein resides in the cilium axoneme. In Chlamydomonas reinhardtii (Chlamydomonas smithii), this protein is Cilia- and flagella-associated protein 54.